Reading from the N-terminus, the 213-residue chain is MLYRLSEKQQTDLRCNKLTVDGFELVKMLKELRLHNRNINFLEFLRGVQIVPSDSVFLGEIDENSHTQDNTTTSILKEKELYDGIPLLPSMAGVSMDPEREKKSELRLMKNQISAIINILFTVVGTVTAVWYCTSSLSIEKKIALCAFSAILVLVADTFLYVRYLSAQPVRTSKNHTRQIIYTWTTNDPVLQSNEQLAIELGAIPSLKEKKNQ.

2 helical membrane passes run 113-133 (ISAIINILFTVVGTVTAVWYC) and 142-162 (KIALCAFSAILVLVADTFLYV).

The protein localises to the endoplasmic reticulum membrane. Its function is as follows. Required for vacuolar ATPase assembly. The sequence is that of Vacuolar ATPase assembly integral membrane protein vph2 (vph2) from Schizosaccharomyces pombe (strain 972 / ATCC 24843) (Fission yeast).